Consider the following 617-residue polypeptide: Chaperone protein HscA homolog (617 aa).

It belongs to the heat shock protein 70 family.

Chaperone involved in the maturation of iron-sulfur cluster-containing proteins. Has a low intrinsic ATPase activity which is markedly stimulated by HscB. The polypeptide is Chaperone protein HscA homolog (Photobacterium profundum (strain SS9)).